We begin with the raw amino-acid sequence, 301 residues long: 3-methyl-2-oxobutanoate hydroxymethyltransferase (301 aa).

Residues 1–12 (MAPSNLPESTTP) are compositionally biased toward polar residues. Residues 1–24 (MAPSNLPESTTPAEVPAPYGTGPA) form a disordered region. Residues aspartate 82 and aspartate 121 each contribute to the Mg(2+) site. Residues 82–83 (DS), aspartate 121, and lysine 151 each bind 3-methyl-2-oxobutanoate. Mg(2+) is bound at residue glutamate 153. Catalysis depends on glutamate 219, which acts as the Proton acceptor.

Belongs to the PanB family. Homodecamer; pentamer of dimers. Mg(2+) serves as cofactor.

It is found in the cytoplasm. The enzyme catalyses 3-methyl-2-oxobutanoate + (6R)-5,10-methylene-5,6,7,8-tetrahydrofolate + H2O = 2-dehydropantoate + (6S)-5,6,7,8-tetrahydrofolate. It participates in cofactor biosynthesis; (R)-pantothenate biosynthesis; (R)-pantoate from 3-methyl-2-oxobutanoate: step 1/2. Its function is as follows. Catalyzes the reversible reaction in which hydroxymethyl group from 5,10-methylenetetrahydrofolate is transferred onto alpha-ketoisovalerate to form ketopantoate. This Paenarthrobacter aurescens (strain TC1) protein is 3-methyl-2-oxobutanoate hydroxymethyltransferase.